A 346-amino-acid chain; its full sequence is uncharacterized protein (346 aa).

The protein belongs to the Gfo/Idh/MocA family.

This is an uncharacterized protein from Escherichia coli (strain K12).